A 378-amino-acid chain; its full sequence is Ribosomal RNA large subunit methyltransferase G (378 aa).

It belongs to the methyltransferase superfamily. RlmG family.

The protein resides in the cytoplasm. It carries out the reaction guanosine(1835) in 23S rRNA + S-adenosyl-L-methionine = N(2)-methylguanosine(1835) in 23S rRNA + S-adenosyl-L-homocysteine + H(+). Functionally, specifically methylates the guanine in position 1835 (m2G1835) of 23S rRNA. This Escherichia coli O9:H4 (strain HS) protein is Ribosomal RNA large subunit methyltransferase G.